We begin with the raw amino-acid sequence, 207 residues long: Sodium/potassium-transporting ATPase subunit beta-1-interacting protein 1 (207 aa).

3 helical membrane-spanning segments follow: residues 2 to 22, 35 to 55, and 62 to 82; these read GRCSGRCTLVGICCLQLAAAL, APILANFLHIMVVILGILGTL, and LILYSIWLALWVAWNAFIICF. An N-linked (GlcNAc...) asparagine glycan is attached at Asn100. A helical transmembrane segment spans residues 147 to 167; sequence ALSSALQIFLALFGFVYACYV.

It belongs to the NKAIN family. In terms of assembly, interacts with atp1b1 C-terminus.

It is found in the cell membrane. The chain is Sodium/potassium-transporting ATPase subunit beta-1-interacting protein 1 (nkain1) from Xenopus laevis (African clawed frog).